A 526-amino-acid polypeptide reads, in one-letter code: MSGNKVEVDKRRTFAIISHPDAGKTTITEKVLLFGNALQKAGTVKGKKSGQHAKSDWMEMEKDRGISITTSVMQFPYGGALVNLLDTPGHEDFSEDTYRTLTAVDSCLMVIDSAKGVEERTIKLMEVTRLRDTPIVTFMNKLDRDIRDPIDLMDEVESVLNIACAPITWPIGSGKEFKGIYHILRDEVVLYQGGMGHTIQERRVIKGINNPDLEKAIGSYAADLRDEMELVRGASHEFDHAAFLKGELTPVFFGTALGNFGVDHILDGIVEWAPKPLPRESDTRVIMPDEEKFTGFVFKIQANMDPKHRDRVAFMRVCSGRYEQGMKMHHVRIGKDVNVSDALTFMAGDRERAEEAYPGDIIGLHNHGTIRIGDTFTQGEKFRFTGVPNFAPEMFRRIRLRDPLKQKQLLKGLVQLSEEGAVQVFRPIDTNDLIVGAVGVLQFEVVVGRLKSEYNVEAIYEGISVSTARWVYCKDERKLEEFRRKCSQNLALDGGDNLTYIAPTMVNLNLSMERYPDIEFAKTREH.

Positions 9 to 277 constitute a tr-type G domain; the sequence is DKRRTFAIIS…GIVEWAPKPL (269 aa). Residues 18–25, 86–90, and 140–143 each bind GTP; these read SHPDAGKT, DTPGH, and NKLD.

The protein belongs to the TRAFAC class translation factor GTPase superfamily. Classic translation factor GTPase family. PrfC subfamily.

The protein resides in the cytoplasm. Increases the formation of ribosomal termination complexes and stimulates activities of RF-1 and RF-2. It binds guanine nucleotides and has strong preference for UGA stop codons. It may interact directly with the ribosome. The stimulation of RF-1 and RF-2 is significantly reduced by GTP and GDP, but not by GMP. The protein is Peptide chain release factor 3 of Shewanella baltica (strain OS155 / ATCC BAA-1091).